A 243-amino-acid polypeptide reads, in one-letter code: Carboxy-S-adenosyl-L-methionine synthase (243 aa).

Residues Tyr40, 65-67 (GCS), 90-91 (DN), 118-119 (DI), Asn133, and Arg200 contribute to the S-adenosyl-L-methionine site.

Belongs to the class I-like SAM-binding methyltransferase superfamily. Cx-SAM synthase family. In terms of assembly, homodimer.

It catalyses the reaction prephenate + S-adenosyl-L-methionine = carboxy-S-adenosyl-L-methionine + 3-phenylpyruvate + H2O. Its function is as follows. Catalyzes the conversion of S-adenosyl-L-methionine (SAM) to carboxy-S-adenosyl-L-methionine (Cx-SAM). The chain is Carboxy-S-adenosyl-L-methionine synthase from Shewanella loihica (strain ATCC BAA-1088 / PV-4).